Consider the following 231-residue polypeptide: Thiamine import ATP-binding protein ThiQ (231 aa).

In terms of domain architecture, ABC transporter spans Leu2–Gly230. An ATP-binding site is contributed by Gly32–Ser39.

It belongs to the ABC transporter superfamily. Thiamine importer (TC 3.A.1.19.1) family. In terms of assembly, the complex is composed of two ATP-binding proteins (ThiQ), two transmembrane proteins (ThiP) and a solute-binding protein (ThiB).

It localises to the cell inner membrane. It carries out the reaction thiamine(out) + ATP + H2O = thiamine(in) + ADP + phosphate + H(+). Functionally, part of the ABC transporter complex ThiBPQ involved in thiamine import. Responsible for energy coupling to the transport system. The protein is Thiamine import ATP-binding protein ThiQ of Ruegeria sp. (strain TM1040) (Silicibacter sp.).